Reading from the N-terminus, the 845-residue chain is Meiotically up-regulated gene 4 protein (845 aa).

The segment at 122–158 (LSTTDEQPKEPSIISISSSSSDPSSSPPPSSSLLKTP) is disordered. Residues 132–145 (PSIISISSSSSDPS) are compositionally biased toward low complexity. A helical transmembrane segment spans residues 726 to 746 (FLVFLTFTGMTLFILYQLTFP).

The protein localises to the membrane. Its function is as follows. Has a role in meiosis. This chain is Meiotically up-regulated gene 4 protein (mug4), found in Schizosaccharomyces pombe (strain 972 / ATCC 24843) (Fission yeast).